Reading from the N-terminus, the 128-residue chain is uncharacterized protein (128 aa).

The span at 1–28 (MDADDFGKKDLENGNESPKKPIFMKDWK) shows a compositional bias: basic and acidic residues. The interval 1 to 30 (MDADDFGKKDLENGNESPKKPIFMKDWKNS) is disordered.

Its subcellular location is the cytoplasm. The protein resides in the nucleus. This is an uncharacterized protein from Schizosaccharomyces pombe (strain 972 / ATCC 24843) (Fission yeast).